Consider the following 421-residue polypeptide: BEN domain-containing protein 5 (421 aa).

Lys133 is subject to N6-acetyllysine. A coiled-coil region spans residues Arg180–Leu243. Residue Lys258 forms a Glycyl lysine isopeptide (Lys-Gly) (interchain with G-Cter in SUMO2) linkage. The BEN domain maps to Gly302–Cys408.

Its function is as follows. Acts as a transcriptional repressor. In Homo sapiens (Human), this protein is BEN domain-containing protein 5 (BEND5).